A 295-amino-acid polypeptide reads, in one-letter code: Protoheme IX farnesyltransferase (295 aa).

The next 7 membrane-spanning stretches (helical) occupy residues 43–63 (PIQLALLVLGTSAAAGGVAAL), 92–112 (SAFVLGVLMCIGSLFLLYALV), 114–134 (PLAALFTLLTIFSYLGWYTPA), 140–160 (WSTEIGAVAGAFPPLIGWSAG), 166–186 (ALGWVLFGVLFFWQVPHFMAV), 231–251 (LLWGLTTWFYGVAAAVTGLWF), and 272–292 (FFASIGYLPLVLGALVIDRLF).

This sequence belongs to the UbiA prenyltransferase family. Protoheme IX farnesyltransferase subfamily.

The protein resides in the cell inner membrane. It catalyses the reaction heme b + (2E,6E)-farnesyl diphosphate + H2O = Fe(II)-heme o + diphosphate. Its pathway is porphyrin-containing compound metabolism; heme O biosynthesis; heme O from protoheme: step 1/1. Converts heme B (protoheme IX) to heme O by substitution of the vinyl group on carbon 2 of heme B porphyrin ring with a hydroxyethyl farnesyl side group. This Opitutus terrae (strain DSM 11246 / JCM 15787 / PB90-1) protein is Protoheme IX farnesyltransferase.